The primary structure comprises 850 residues: cAMP-inducible prespore protein D7 (850 aa).

A signal peptide spans 1 to 24 (MYSKKYTSFVIVLILSCIISTCTS). Positions 119–130 (QNNNIGSSIGDS) are enriched in low complexity. Disordered stretches follow at residues 119–167 (QNNN…SKTT) and 787–850 (DAEL…QNQK). The span at 131 to 143 (TGASTSPQFQSIN) shows a compositional bias: polar residues. Over residues 144-154 (GLSGASQSSGS) the composition is skewed to low complexity. Over residues 787 to 798 (DAELAKNNKQEN) the composition is skewed to basic and acidic residues. Over residues 801-820 (ENLVQEKQQSPDQIKNQLKN) the composition is skewed to polar residues. Low complexity predominate over residues 837–850 (EKNQQLLEQEQNQK).

This Dictyostelium discoideum (Social amoeba) protein is cAMP-inducible prespore protein D7 (D7).